The sequence spans 169 residues: Zinc metalloproteinase-disintegrin-like mikarin (169 aa).

Residues 14–57 (KYLEYVVVDNNMYRNYGNAGPCVMSAEISFEPLQEFSSCDIQEP) enclose the Peptidase M12B domain. Residues 65–129 (PAVCGNYYVE…PEICTGRSAK (65 aa)) enclose the Disintegrin domain. 6 disulfides stabilise this stretch: C68–C97, C79–C92, C81–C87, C105–C111, C110–C123, and C150–C161. Residues 116–118 (DCD) carry the D/ECD-tripeptide motif.

It belongs to the venom metalloproteinase (M12B) family. P-III subfamily. P-IIIa sub-subfamily. As to quaternary structure, monomer. Requires Zn(2+) as cofactor. In terms of tissue distribution, expressed by the venom gland.

It is found in the secreted. Inhibited by EDTA, but not by PMSF. Functionally, snake venom zinc metalloproteinase that calcium-independently catalyzes the conversion of prothrombin (F2) to alpha-thrombin through the formation of a thrombin intermediate. In Micropechis ikaheca (New Guinean small-eyed snake), this protein is Zinc metalloproteinase-disintegrin-like mikarin.